The following is a 258-amino-acid chain: Acyl-[acyl-carrier-protein]--UDP-N-acetylglucosamine O-acyltransferase (258 aa).

The protein belongs to the transferase hexapeptide repeat family. LpxA subfamily. Homotrimer.

It localises to the cytoplasm. It carries out the reaction a (3R)-hydroxyacyl-[ACP] + UDP-N-acetyl-alpha-D-glucosamine = a UDP-3-O-[(3R)-3-hydroxyacyl]-N-acetyl-alpha-D-glucosamine + holo-[ACP]. The protein operates within glycolipid biosynthesis; lipid IV(A) biosynthesis; lipid IV(A) from (3R)-3-hydroxytetradecanoyl-[acyl-carrier-protein] and UDP-N-acetyl-alpha-D-glucosamine: step 1/6. Functionally, involved in the biosynthesis of lipid A, a phosphorylated glycolipid that anchors the lipopolysaccharide to the outer membrane of the cell. The protein is Acyl-[acyl-carrier-protein]--UDP-N-acetylglucosamine O-acyltransferase of Thiobacillus denitrificans (strain ATCC 25259 / T1).